A 556-amino-acid chain; its full sequence is Delta-1-pyrroline-5-carboxylate dehydrogenase, mitochondrial (556 aa).

Residues 1 to 17 (MLRARSAVSQSWKGFKT) constitute a mitochondrion transit peptide. NAD(+) contacts are provided by residues Lys-226 and 279-283 (GSVPT). Glu-307 acts as the Proton acceptor in catalysis. The active-site Nucleophile is the Cys-341. Position 440 (Glu-440) interacts with NAD(+). Ser-506 contributes to the substrate binding site.

Belongs to the aldehyde dehydrogenase family.

It localises to the mitochondrion matrix. The enzyme catalyses L-glutamate 5-semialdehyde + NAD(+) + H2O = L-glutamate + NADH + 2 H(+). The protein operates within amino-acid degradation; L-proline degradation into L-glutamate; L-glutamate from L-proline: step 2/2. In terms of biological role, irreversible conversion of delta-1-pyrroline-5-carboxylate (P5C), derived either from proline or ornithine, to glutamate. This is a necessary step in the pathway interconnecting the urea and tricarboxylic acid cycles. The sequence is that of Delta-1-pyrroline-5-carboxylate dehydrogenase, mitochondrial (aldh4a1) from Danio rerio (Zebrafish).